The primary structure comprises 96 residues: UPF0251 protein Spea_3639 (96 aa).

The protein belongs to the UPF0251 family.

The protein is UPF0251 protein Spea_3639 of Shewanella pealeana (strain ATCC 700345 / ANG-SQ1).